We begin with the raw amino-acid sequence, 73 residues long: ATP synthase subunit c (73 aa).

2 helical membrane-spanning segments follow: residues 4–24 (LAIG…GIGI) and 51–71 (GALA…IIIF).

Belongs to the ATPase C chain family. In terms of assembly, F-type ATPases have 2 components, F(1) - the catalytic core - and F(0) - the membrane proton channel. F(1) has five subunits: alpha(3), beta(3), gamma(1), delta(1), epsilon(1). F(0) has three main subunits: a(1), b(2) and c(10-14). The alpha and beta chains form an alternating ring which encloses part of the gamma chain. F(1) is attached to F(0) by a central stalk formed by the gamma and epsilon chains, while a peripheral stalk is formed by the delta and b chains.

The protein localises to the cell membrane. Its function is as follows. F(1)F(0) ATP synthase produces ATP from ADP in the presence of a proton or sodium gradient. F-type ATPases consist of two structural domains, F(1) containing the extramembraneous catalytic core and F(0) containing the membrane proton channel, linked together by a central stalk and a peripheral stalk. During catalysis, ATP synthesis in the catalytic domain of F(1) is coupled via a rotary mechanism of the central stalk subunits to proton translocation. Key component of the F(0) channel; it plays a direct role in translocation across the membrane. A homomeric c-ring of between 10-14 subunits forms the central stalk rotor element with the F(1) delta and epsilon subunits. The protein is ATP synthase subunit c of Caldanaerobacter subterraneus subsp. tengcongensis (strain DSM 15242 / JCM 11007 / NBRC 100824 / MB4) (Thermoanaerobacter tengcongensis).